A 383-amino-acid polypeptide reads, in one-letter code: Cytochrome b (383 aa).

The next 4 helical transmembrane spans lie at 32–52 (VGSLLGLCLVMQMASGMFLAM), 76–98 (WLMRYIHANGASFFFMCLYLHMG), 113–133 (VWSMGVMMFMLTMATAFMGYC), and 179–199 (FFALHYLLPFILAALVVMHFM). Residues His-82 and His-96 each coordinate heme b. Heme b is bound by residues His-183 and His-197. His-202 serves as a coordination point for a ubiquinone. A run of 4 helical transmembrane segments spans residues 225-245 (FVFKDLMTVFVFILMFSLFVF), 289-309 (LGGVMAMFAALLMLLMLPMTD), 321-341 (LSKLSFYLFLFNFFLLMNMGQ), and 348-368 (FIELGQFATVYYFSYFLMLVP).

Belongs to the cytochrome b family. Fungal cytochrome b-c1 complex contains 10 subunits; 3 respiratory subunits, 2 core proteins and 5 low-molecular weight proteins. Cytochrome b-c1 complex is a homodimer. Heme b is required as a cofactor.

The protein localises to the mitochondrion inner membrane. In terms of biological role, component of the ubiquinol-cytochrome c reductase complex (complex III or cytochrome b-c1 complex) that is part of the mitochondrial respiratory chain. The b-c1 complex mediates electron transfer from ubiquinol to cytochrome c. Contributes to the generation of a proton gradient across the mitochondrial membrane that is then used for ATP synthesis. This chain is Cytochrome b (COB), found in Debaryomyces hansenii (strain ATCC 36239 / CBS 767 / BCRC 21394 / JCM 1990 / NBRC 0083 / IGC 2968) (Yeast).